The sequence spans 897 residues: Interleukin enhancer-binding factor 3-A (897 aa).

The region spanning R5–G379 is the DZF domain. Disordered stretches follow at residues Q52–P85, T364–V403, and M466–S502. Composition is skewed to basic and acidic residues over residues E72–T81 and R373–P384. The short motif at K372 to K390 is the Bipartite nuclear localization signal element. 2 DRBM domains span residues E399 to L468 and H521 to P587. Disordered regions lie at residues P627 to G650 and G708 to A797. The segment covering R637–G650 has biased composition (gly residues). The segment covering P714–P747 has biased composition (pro residues). Over residues Y749–A794 the composition is skewed to low complexity.

A component of a ybx2/frgy2-containing mRNA-ribonucleoprotein (mRNP) complex. Also a component of the CCAAT box transcription factor (CBTF) complex. In terms of processing, phosphorylated. Phosphorylation affects nuclear translocation. Post-translationally, methylated by protein arginine N-methyltransferase 1 (prmt1b) in the RGG-rich domain. Methylation decreases DNA-binding and thereby decreases transcription of the gata2 gene, but does not regulate dsRNA binding or subcellular localization. As to expression, expressed mainly in the ectoderm (at protein level).

Its subcellular location is the nucleus. It is found in the cytoplasm. RNA-binding protein that plays an essential role in the biogenesis of circular RNAs (circRNAs) which are produced by back-splicing circularization of pre-mRNAs. Within the nucleus, promotes circRNAs processing by stabilizing the regulatory elements residing in the flanking introns of the circularized exons. Plays thereby a role in the back-splicing of a subset of circRNAs. As a consequence, participates in a wide range of transcriptional and post-transcriptional processes. Binds to poly-U elements and AU-rich elements (AREs) in the 3'-UTR of target mRNAs. Upon viral infection, ILF3 accumulates in the cytoplasm and participates in the innate antiviral response. Mechanistically, ILF3 becomes phosphorylated and activated by the double-stranded RNA-activated protein kinase/PKR which releases ILF3 from cellular mature circRNAs. In turn, unbound ILF3 molecules are able to interact with and thus inhibit viral mRNAs. Has a cytoplasmic role early in development as part of a ribonucleoprotein (mRNP) complex which may regulate mRNA transport and/or translation. Following nuclear localization at the mid-blastula transition, acts as a transcription factor and binds the 5'-CCAAT-3' promoter sequence to regulate transcription of the gata2 gene as a subunit of the CCAAT box transcription factor (CBTF). Its role as an mRNP component negatively regulates its activity as a transcription factor by precluding its nuclear localization. In Xenopus laevis (African clawed frog), this protein is Interleukin enhancer-binding factor 3-A (ilf3-a).